The primary structure comprises 239 residues: Ribonuclease PH (239 aa).

Residues Arg-87 and 125–127 each bind phosphate; that span reads GTR.

The protein belongs to the RNase PH family. As to quaternary structure, homohexameric ring arranged as a trimer of dimers.

The enzyme catalyses tRNA(n+1) + phosphate = tRNA(n) + a ribonucleoside 5'-diphosphate. Functionally, phosphorolytic 3'-5' exoribonuclease that plays an important role in tRNA 3'-end maturation. Removes nucleotide residues following the 3'-CCA terminus of tRNAs; can also add nucleotides to the ends of RNA molecules by using nucleoside diphosphates as substrates, but this may not be physiologically important. Probably plays a role in initiation of 16S rRNA degradation (leading to ribosome degradation) during starvation. The protein is Ribonuclease PH of Ectopseudomonas mendocina (strain ymp) (Pseudomonas mendocina).